The sequence spans 705 residues: Putative membrane protein SCO6666 (705 aa).

13 helical membrane-spanning segments follow: residues 16–36 (VMLL…GVFG), 144–164 (LHGI…PLLG), 177–197 (NAEL…FGGL), 201–221 (GLPL…LFGF), 232–252 (IQVT…LMLV), 280–300 (LFSG…PSTF), 306–326 (LAVA…LPAL), 360–380 (VAVL…VTGM), 504–524 (ALTV…SVLL), 528–548 (TVAT…WVFQ), 561–581 (LGAL…GLAM), 615–635 (VVTC…TGGF), and 636–656 (SPIL…ATVV).

It belongs to the resistance-nodulation-cell division (RND) (TC 2.A.6) family. MmpL subfamily.

Its subcellular location is the cell membrane. The polypeptide is Putative membrane protein SCO6666 (Streptomyces coelicolor (strain ATCC BAA-471 / A3(2) / M145)).